A 409-amino-acid chain; its full sequence is Phosphatidylserine decarboxylase proenzyme, mitochondrial (409 aa).

Residues 1–52 (MATSVGHRCLGLLHGVAPWRSSLHPCEITALSQSLQPLRKLPFRAFRTDARK) constitute a mitochondrion transit peptide. At 53-63 (IHTAPARTMFL) the chain is on the mitochondrial matrix side. Residues 64-82 (LRPVPILLATGGGYAGYRQ) traverse the membrane as a helical segment. At 83-409 (YEKYRERELE…IRFGEALGSL (327 aa)) the chain is on the mitochondrial intermembrane side. Active-site charge relay system; for autoendoproteolytic cleavage activity residues include D191, H267, and S378. Residue S378 is the Schiff-base intermediate with substrate; via pyruvic acid; for decarboxylase activity of the active site. Position 378 is a pyruvic acid (Ser); by autocatalysis (S378).

Belongs to the phosphatidylserine decarboxylase family. PSD-B subfamily. Eukaryotic type I sub-subfamily. As to quaternary structure, heterodimer of a large membrane-associated beta subunit and a small pyruvoyl-containing alpha subunit. It depends on pyruvate as a cofactor. In terms of processing, is synthesized initially as an inactive proenzyme. Formation of the active enzyme involves a self-maturation process in which the active site pyruvoyl group is generated from an internal serine residue via an autocatalytic post-translational modification. Two non-identical subunits are generated from the proenzyme in this reaction, and the pyruvate is formed at the N-terminus of the alpha chain, which is derived from the carboxyl end of the proenzyme. The autoendoproteolytic cleavage occurs by a canonical serine protease mechanism, in which the side chain hydroxyl group of the serine supplies its oxygen atom to form the C-terminus of the beta chain, while the remainder of the serine residue undergoes an oxidative deamination to produce ammonia and the pyruvoyl prosthetic group on the alpha chain. During this reaction, the Ser that is part of the protease active site of the proenzyme becomes the pyruvoyl prosthetic group, which constitutes an essential element of the active site of the mature decarboxylase.

The protein resides in the mitochondrion inner membrane. Its subcellular location is the lipid droplet. It is found in the cytoplasm. The catalysed reaction is a 1,2-diacyl-sn-glycero-3-phospho-L-serine + H(+) = a 1,2-diacyl-sn-glycero-3-phosphoethanolamine + CO2. The protein operates within phospholipid metabolism; phosphatidylethanolamine biosynthesis. In terms of biological role, catalyzes the formation of phosphatidylethanolamine (PtdEtn) from phosphatidylserine (PtdSer). Plays a central role in phospholipid metabolism and in the interorganelle trafficking of phosphatidylserine. May be involved in lipid droplet biogenesis at the endoplasmic reticulum membrane. The sequence is that of Phosphatidylserine decarboxylase proenzyme, mitochondrial from Pongo abelii (Sumatran orangutan).